Reading from the N-terminus, the 165-residue chain is Nucleotide-binding protein SYNW1816 (165 aa).

Belongs to the YajQ family.

Functionally, nucleotide-binding protein. This chain is Nucleotide-binding protein SYNW1816, found in Parasynechococcus marenigrum (strain WH8102).